A 124-amino-acid chain; its full sequence is uncharacterized protein (124 aa).

It belongs to the asfivirus H124R family.

It is found in the virion. This is an uncharacterized protein from Ornithodoros (relapsing fever ticks).